The sequence spans 554 residues: Glucose-6-phosphate isomerase (554 aa).

An N-acetylserine modification is found at serine 2. At threonine 53 the chain carries Phosphothreonine. D-glucose 6-phosphate-binding positions include 168-169 (GS), 218-223 (SKTFTT), glutamine 363, glutamate 367, histidine 398, and lysine 520. The residue at position 220 (threonine 220) is a Phosphothreonine. Residue glutamate 367 is the Proton donor of the active site. Residues histidine 398 and lysine 520 contribute to the active site.

The protein belongs to the GPI family. As to quaternary structure, homodimer.

The protein resides in the cytoplasm. Its subcellular location is the cytosol. The catalysed reaction is alpha-D-glucose 6-phosphate = beta-D-fructose 6-phosphate. It functions in the pathway carbohydrate degradation; glycolysis; D-glyceraldehyde 3-phosphate and glycerone phosphate from D-glucose: step 2/4. Strongly inhibited by the polyol (sugar alcohol) phosphate D-glucitol 6-phosphate (D-sorbitol 6-phosphate). Also inhibited by the polyol (sugar alcohol) phosphate D-ribitol 5-phosphate. In the cytoplasm, catalyzes the conversion of glucose-6-phosphate to fructose-6-phosphate, the second step in glycolysis, and the reverse reaction during gluconeogenesis. The protein is Glucose-6-phosphate isomerase (PGI1) of Saccharomyces cerevisiae (strain ATCC 204508 / S288c) (Baker's yeast).